A 339-amino-acid chain; its full sequence is Phenylalanine--tRNA ligase alpha subunit (339 aa).

Position 254 (E254) interacts with Mg(2+).

The protein belongs to the class-II aminoacyl-tRNA synthetase family. Phe-tRNA synthetase alpha subunit type 1 subfamily. In terms of assembly, tetramer of two alpha and two beta subunits. The cofactor is Mg(2+).

It is found in the cytoplasm. It carries out the reaction tRNA(Phe) + L-phenylalanine + ATP = L-phenylalanyl-tRNA(Phe) + AMP + diphosphate + H(+). The chain is Phenylalanine--tRNA ligase alpha subunit from Clostridium acetobutylicum (strain ATCC 824 / DSM 792 / JCM 1419 / IAM 19013 / LMG 5710 / NBRC 13948 / NRRL B-527 / VKM B-1787 / 2291 / W).